Here is a 245-residue protein sequence, read N- to C-terminus: Retrovirus-related Pol polyprotein from type-1 retrotransposable element R1 (245 aa).

A Reverse transcriptase domain is found at 1–105 (LKDGTGIVAA…VDLETYCNKA (105 aa)). The tract at residues 106-245 (EVRQKFREKE…IVRDDSNLEQ (140 aa)) is nucleic acid-binding endonuclease.

The enzyme catalyses DNA(n) + a 2'-deoxyribonucleoside 5'-triphosphate = DNA(n+1) + diphosphate. This Popillia japonica (Japanese beetle) protein is Retrovirus-related Pol polyprotein from type-1 retrotransposable element R1.